Reading from the N-terminus, the 160-residue chain is Major pollen allergen Bet v 1-M/N (160 aa).

Brassinolide is bound by residues Lys55, Tyr82, Tyr84, and Asn101.

It belongs to the BetVI family.

Its subcellular location is the cytoplasm. Its function is as follows. May be a general steroid carrier protein. The polypeptide is Major pollen allergen Bet v 1-M/N (BETV1M) (Betula pendula (European white birch)).